A 178-amino-acid polypeptide reads, in one-letter code: Photosystem I assembly protein Ycf4 (178 aa).

Transmembrane regions (helical) follow at residues 19–39 (ILVA…SLSS) and 61–81 (LVMG…WAVI).

The protein belongs to the Ycf4 family.

Its subcellular location is the cellular thylakoid membrane. Functionally, seems to be required for the assembly of the photosystem I complex. The chain is Photosystem I assembly protein Ycf4 from Synechococcus sp. (strain WH7803).